Consider the following 374-residue polypeptide: Protein TAB2 homolog, chloroplastic (374 aa).

The N-terminal 64 residues, 1-64 (MATLGFNTRR…SLSITKEQEV (64 aa)), are a transit peptide targeting the chloroplast. The interval 58–84 (ITKEQEVANEVEEDDPTSELSYLDPES) is disordered. A compositionally biased stretch (acidic residues) spans 64–74 (VANEVEEDDPT).

The protein resides in the plastid. It is found in the chloroplast. In terms of biological role, nuclear genome-encoded A/U-rich RNA-binding protein involved in the biogenesis of photosystem I (PSI) and II (PSII). Required for the light-controlled accumulation of PSI and PSII during early plant development. Does not seem to be required for the translation of mRNAs of the PSI subunits. This is Protein TAB2 homolog, chloroplastic from Arabidopsis thaliana (Mouse-ear cress).